We begin with the raw amino-acid sequence, 121 residues long: UPF0102 protein Xfasm12_1748 (121 aa).

It belongs to the UPF0102 family.

The chain is UPF0102 protein Xfasm12_1748 from Xylella fastidiosa (strain M12).